Consider the following 248-residue polypeptide: Adenosylcobinamide-GDP ribazoletransferase (248 aa).

Transmembrane regions (helical) follow at residues 32 to 52, 60 to 80, 103 to 123, 134 to 154, 170 to 190, 195 to 215, and 227 to 247; these read FPLV…IGMV, ALLV…DGLA, AVGS…WIAL, WIVS…SVMT, AGGW…VLVM, LPIV…GMLA, and LGAS…LLLF.

This sequence belongs to the CobS family. It depends on Mg(2+) as a cofactor.

The protein resides in the cell inner membrane. It catalyses the reaction alpha-ribazole + adenosylcob(III)inamide-GDP = adenosylcob(III)alamin + GMP + H(+). It carries out the reaction alpha-ribazole 5'-phosphate + adenosylcob(III)inamide-GDP = adenosylcob(III)alamin 5'-phosphate + GMP + H(+). The protein operates within cofactor biosynthesis; adenosylcobalamin biosynthesis; adenosylcobalamin from cob(II)yrinate a,c-diamide: step 7/7. Joins adenosylcobinamide-GDP and alpha-ribazole to generate adenosylcobalamin (Ado-cobalamin). Also synthesizes adenosylcobalamin 5'-phosphate from adenosylcobinamide-GDP and alpha-ribazole 5'-phosphate. This Prosthecochloris aestuarii (strain DSM 271 / SK 413) protein is Adenosylcobinamide-GDP ribazoletransferase.